Here is a 515-residue protein sequence, read N- to C-terminus: ADP,ATP carrier protein 1 (515 aa).

The next 12 membrane-spanning stretches (helical) occupy residues 24–44, 62–82, 93–113, 124–144, 149–169, 184–204, 226–246, 286–306, 329–349, 358–378, 383–403, and 465–485; these read LKKV…YTVL, AIPF…MLIY, ALFY…PTVI, EFAD…VAIL, FAAF…LMFW, FYAL…RAIV, LLMA…WWIN, YILL…LIEV, FSFW…GNVI, ALVT…LVIF, SGLV…VGAI, and IGAM…IWLV.

The protein belongs to the ADP/ATP translocase tlc family.

Its subcellular location is the cell membrane. The polypeptide is ADP,ATP carrier protein 1 (tlcA) (Chlamydia pneumoniae (Chlamydophila pneumoniae)).